Consider the following 378-residue polypeptide: Ferredoxin--NADP reductase, root isozyme, chloroplastic (378 aa).

Residues 1-17 are compositionally biased toward low complexity; sequence MATAVASQVAVSAPAGS. The disordered stretch occupies residues 1-27; it reads MATAVASQVAVSAPAGSDRGLRSSGIQ. The transit peptide at 1–62 directs the protein to the chloroplast; that stretch reads MATAVASQVA…PRHANKVLCM (62 aa). The 129-residue stretch at 93–221 folds into the FAD-binding FR-type domain; the sequence is KEPYTATIVS…TGPSGKIMLL (129 aa). FAD-binding positions include 153-156, 174-176, Tyr180, 195-197, and Thr237; these read RLYS, CVR, and VCS. NADP(+) contacts are provided by Ser156 and Arg176. Residues Thr237, 269–270, 299–300, Lys309, 337–338, and Glu376 contribute to the NADP(+) site; these read VA, SR, and GL.

The protein belongs to the ferredoxin--NADP reductase type 1 family. Requires FAD as cofactor.

The protein resides in the plastid. Its subcellular location is the chloroplast. The catalysed reaction is 2 reduced [2Fe-2S]-[ferredoxin] + NADP(+) + H(+) = 2 oxidized [2Fe-2S]-[ferredoxin] + NADPH. The protein operates within energy metabolism; photosynthesis. May play a key role in regulating the relative amounts of cyclic and non-cyclic electron flow to meet the demands of the plant for ATP and reducing power. Is involved in nitrate assimilation. The polypeptide is Ferredoxin--NADP reductase, root isozyme, chloroplastic (Oryza sativa subsp. japonica (Rice)).